Here is a 174-residue protein sequence, read N- to C-terminus: FAD synthase (174 aa).

ATP is bound by residues 34-35 (TF), 39-42 (HPGH), D119, and Y147.

The protein belongs to the archaeal FAD synthase family. As to quaternary structure, homodimer. A divalent metal cation serves as cofactor.

The catalysed reaction is FMN + ATP + H(+) = FAD + diphosphate. It functions in the pathway cofactor biosynthesis; FAD biosynthesis; FAD from FMN: step 1/1. In terms of biological role, catalyzes the transfer of the AMP portion of ATP to flavin mononucleotide (FMN) to produce flavin adenine dinucleotide (FAD) coenzyme. This Methanococcus voltae (strain ATCC BAA-1334 / A3) protein is FAD synthase.